A 266-amino-acid polypeptide reads, in one-letter code: Undecaprenyl-diphosphatase (266 aa).

The next 8 helical transmembrane spans lie at 1–21 (MEFF…FIPI), 39–59 (PGSS…FWYF), 87–107 (IFIG…FVPG), 117–137 (LSIA…DIST), 153–173 (YIGI…GATI), 189–209 (FSFL…FFSA), 216–236 (FPFL…LLAI), and 246–266 (HGLK…LFNL).

This sequence belongs to the UppP family.

It is found in the cell inner membrane. The catalysed reaction is di-trans,octa-cis-undecaprenyl diphosphate + H2O = di-trans,octa-cis-undecaprenyl phosphate + phosphate + H(+). Catalyzes the dephosphorylation of undecaprenyl diphosphate (UPP). Confers resistance to bacitracin. The chain is Undecaprenyl-diphosphatase from Prochlorococcus marinus subsp. pastoris (strain CCMP1986 / NIES-2087 / MED4).